A 268-amino-acid chain; its full sequence is Putative sgc region protein SgcQ (268 aa).

This sequence belongs to the BtpA family.

This is Putative sgc region protein SgcQ (sgcQ) from Escherichia coli (strain K12).